A 124-amino-acid polypeptide reads, in one-letter code: Holo-[acyl-carrier-protein] synthase (124 aa).

Positions 8 and 57 each coordinate Mg(2+).

The protein belongs to the P-Pant transferase superfamily. AcpS family. Mg(2+) serves as cofactor.

It localises to the cytoplasm. It catalyses the reaction apo-[ACP] + CoA = holo-[ACP] + adenosine 3',5'-bisphosphate + H(+). Functionally, transfers the 4'-phosphopantetheine moiety from coenzyme A to a Ser of acyl-carrier-protein. This chain is Holo-[acyl-carrier-protein] synthase, found in Leptospira borgpetersenii serovar Hardjo-bovis (strain JB197).